The primary structure comprises 461 residues: Bifunctional protein GlmU (461 aa).

Positions 1 to 235 (MKAIILAAGL…ITEIFGVNDR (235 aa)) are pyrophosphorylase. UDP-N-acetyl-alpha-D-glucosamine is bound by residues 6 to 9 (LAAG), K20, Q71, and 77 to 78 (GT). A Mg(2+)-binding site is contributed by D102. UDP-N-acetyl-alpha-D-glucosamine is bound by residues G145, E160, N175, and N233. N233 is a Mg(2+) binding site. The segment at 236 to 256 (WELSFAESVIKMRILENLARS) is linker. Residues 257–461 (GVTIHSPESV…LEDKSKVKDE (205 aa)) form an N-acetyltransferase region. Residues R339 and K357 each contribute to the UDP-N-acetyl-alpha-D-glucosamine site. The active-site Proton acceptor is the H369. UDP-N-acetyl-alpha-D-glucosamine contacts are provided by Y372 and N383. Acetyl-CoA is bound by residues A386, S411, G429, and R446.

This sequence in the N-terminal section; belongs to the N-acetylglucosamine-1-phosphate uridyltransferase family. It in the C-terminal section; belongs to the transferase hexapeptide repeat family. As to quaternary structure, homotrimer. Mg(2+) serves as cofactor.

The protein localises to the cytoplasm. It catalyses the reaction alpha-D-glucosamine 1-phosphate + acetyl-CoA = N-acetyl-alpha-D-glucosamine 1-phosphate + CoA + H(+). It carries out the reaction N-acetyl-alpha-D-glucosamine 1-phosphate + UTP + H(+) = UDP-N-acetyl-alpha-D-glucosamine + diphosphate. Its pathway is nucleotide-sugar biosynthesis; UDP-N-acetyl-alpha-D-glucosamine biosynthesis; N-acetyl-alpha-D-glucosamine 1-phosphate from alpha-D-glucosamine 6-phosphate (route II): step 2/2. It participates in nucleotide-sugar biosynthesis; UDP-N-acetyl-alpha-D-glucosamine biosynthesis; UDP-N-acetyl-alpha-D-glucosamine from N-acetyl-alpha-D-glucosamine 1-phosphate: step 1/1. It functions in the pathway bacterial outer membrane biogenesis; LPS lipid A biosynthesis. Its function is as follows. Catalyzes the last two sequential reactions in the de novo biosynthetic pathway for UDP-N-acetylglucosamine (UDP-GlcNAc). The C-terminal domain catalyzes the transfer of acetyl group from acetyl coenzyme A to glucosamine-1-phosphate (GlcN-1-P) to produce N-acetylglucosamine-1-phosphate (GlcNAc-1-P), which is converted into UDP-GlcNAc by the transfer of uridine 5-monophosphate (from uridine 5-triphosphate), a reaction catalyzed by the N-terminal domain. This Hydrogenobaculum sp. (strain Y04AAS1) protein is Bifunctional protein GlmU.